The sequence spans 88 residues: MDEFEYAIFEEEDEEVEGEDDVKLAEIYKLASKLLKLLDEIKSFELKESASLMLIKEIVGDDKVLVGLATKMLQDMSYGFDDDESYVS.

This is an uncharacterized protein from Archaeoglobus fulgidus (strain ATCC 49558 / DSM 4304 / JCM 9628 / NBRC 100126 / VC-16).